The sequence spans 334 residues: Terpene synthase 1 (334 aa).

Residues D82 and D86 each contribute to the Mg(2+) site. The D(D/E)XX(D/E) motif signature appears at 82–86 (DDIFD). R184 serves as a coordination point for substrate. Mg(2+) contacts are provided by N230, S234, and E238. The NSE motif signature appears at 230-238 (NDIYSYHRE). A WxxxxxRY motif motif is present at residues 309-316 (WSESCTRY).

This sequence belongs to the terpene synthase family. Mg(2+) is required as a cofactor.

The catalysed reaction is (2E,6E)-farnesyl diphosphate = gamma-muurolene + diphosphate. The enzyme catalyses (2E,6E)-farnesyl diphosphate = alpha-muurolene + diphosphate. It carries out the reaction (2E,6E)-farnesyl diphosphate = (-)-(E)-beta-caryophyllene + diphosphate. It catalyses the reaction (2E)-geranyl diphosphate = beta-myrcene + diphosphate. Terpene synthase that catalyzes the cyclization of farnesyl diphosphate (FPP) into a mixture of sesquiterpenes with gamma-muurolene as the most abundant compound and (-)-beta-caryophyllene, alpha-muurolene, and 4 unidentified sesquiterpenes as minor compoundss. TPS1 also shows monoterpene synthase activity and can also use geranyl diphosphate (GPP) as a substrate to convert it into a mixture of cyclic and acyclic monoterpenes, including myrcene and linalool. P.polycephalum has a unique biology and these volatile terpenoids could function in internal communication of P.polycephalum, to mark the territory that have been explored, or they may be involved in chemotaxis. The polypeptide is Terpene synthase 1 (Physarum polycephalum (Slime mold)).